The following is a 196-amino-acid chain: MVKIGVLGLQGAVREHVKSVEASGAEAVVVKRIEQLEEIDGLILPGGESTTMRRLIDKYDFMEPLRTFAKSGKPMFGTCAGMILLAKTLIGYDEAHIGAMDITVERNAFGRQKDSFEAALSIKGVGEDFVGVFIRAPYVVDVADDVEVLSTHGDRMVAVRQGPFLAASFHPELTDDHRVTAYFVEMVKEAKMKKVV.

G47–S49 is a binding site for L-glutamine. Catalysis depends on C79, which acts as the Nucleophile. Residues R106 and I134 to R135 contribute to the L-glutamine site. Active-site charge relay system residues include H170 and E172.

This sequence belongs to the glutaminase PdxT/SNO family. In the presence of PdxS, forms a dodecamer of heterodimers. Only shows activity in the heterodimer.

It carries out the reaction aldehydo-D-ribose 5-phosphate + D-glyceraldehyde 3-phosphate + L-glutamine = pyridoxal 5'-phosphate + L-glutamate + phosphate + 3 H2O + H(+). It catalyses the reaction L-glutamine + H2O = L-glutamate + NH4(+). It participates in cofactor biosynthesis; pyridoxal 5'-phosphate biosynthesis. Its function is as follows. Catalyzes the hydrolysis of glutamine to glutamate and ammonia as part of the biosynthesis of pyridoxal 5'-phosphate. The resulting ammonia molecule is channeled to the active site of PdxS. This is Pyridoxal 5'-phosphate synthase subunit PdxT from Bacillus thuringiensis subsp. konkukian (strain 97-27).